The primary structure comprises 158 residues: S-ribosylhomocysteine lyase (158 aa).

Residues His-56, His-60, and Cys-125 each coordinate Fe cation.

This sequence belongs to the LuxS family. As to quaternary structure, homodimer. It depends on Fe cation as a cofactor.

It catalyses the reaction S-(5-deoxy-D-ribos-5-yl)-L-homocysteine = (S)-4,5-dihydroxypentane-2,3-dione + L-homocysteine. In terms of biological role, involved in the synthesis of autoinducer 2 (AI-2) which is secreted by bacteria and is used to communicate both the cell density and the metabolic potential of the environment. The regulation of gene expression in response to changes in cell density is called quorum sensing. Catalyzes the transformation of S-ribosylhomocysteine (RHC) to homocysteine (HC) and 4,5-dihydroxy-2,3-pentadione (DPD). This Leuconostoc mesenteroides subsp. mesenteroides (strain ATCC 8293 / DSM 20343 / BCRC 11652 / CCM 1803 / JCM 6124 / NCDO 523 / NBRC 100496 / NCIMB 8023 / NCTC 12954 / NRRL B-1118 / 37Y) protein is S-ribosylhomocysteine lyase.